The sequence spans 312 residues: tRNA pseudouridine synthase B (312 aa).

Catalysis depends on Asp-48, which acts as the Nucleophile.

It belongs to the pseudouridine synthase TruB family. Type 1 subfamily.

The enzyme catalyses uridine(55) in tRNA = pseudouridine(55) in tRNA. Functionally, responsible for synthesis of pseudouridine from uracil-55 in the psi GC loop of transfer RNAs. The polypeptide is tRNA pseudouridine synthase B (Haemophilus influenzae (strain ATCC 51907 / DSM 11121 / KW20 / Rd)).